A 37-amino-acid polypeptide reads, in one-letter code: Large ribosomal subunit protein bL36 (37 aa).

It belongs to the bacterial ribosomal protein bL36 family.

The protein is Large ribosomal subunit protein bL36 of Staphylococcus saprophyticus subsp. saprophyticus (strain ATCC 15305 / DSM 20229 / NCIMB 8711 / NCTC 7292 / S-41).